A 308-amino-acid chain; its full sequence is tRNA uridine(34) hydroxylase (308 aa).

Residues 129–223 form the Rhodanese domain; it reads QEKDTLILDA…YGKHPETQGA (95 aa). Residue cysteine 183 is the Cysteine persulfide intermediate of the active site.

This sequence belongs to the TrhO family.

The enzyme catalyses uridine(34) in tRNA + AH2 + O2 = 5-hydroxyuridine(34) in tRNA + A + H2O. Catalyzes oxygen-dependent 5-hydroxyuridine (ho5U) modification at position 34 in tRNAs. This is tRNA uridine(34) hydroxylase from Onion yellows phytoplasma (strain OY-M).